Here is a 136-residue protein sequence, read N- to C-terminus: Large ribosomal subunit protein uL16 (136 aa).

Belongs to the universal ribosomal protein uL16 family. In terms of assembly, part of the 50S ribosomal subunit.

In terms of biological role, binds 23S rRNA and is also seen to make contacts with the A and possibly P site tRNAs. This Buchnera aphidicola subsp. Acyrthosiphon pisum (strain 5A) protein is Large ribosomal subunit protein uL16.